A 438-amino-acid polypeptide reads, in one-letter code: Protein translocase subunit SecY (438 aa).

The next 10 membrane-spanning stretches (helical) occupy residues 18-38 (ILFT…PSPG), 76-96 (VGVM…VVIP), 121-141 (IALA…GGLL), 154-174 (IFSL…VMWM), 177-197 (LITE…GIAA), 212-232 (GVIF…VVFV), 269-289 (VIPV…TQLV), 315-335 (PVYI…YVSV), 375-395 (LPGS…LQIG), and 398-418 (GEVQ…GVGL).

It belongs to the SecY/SEC61-alpha family. Component of the Sec protein translocase complex. Heterotrimer consisting of SecY, SecE and SecG subunits. The heterotrimers can form oligomers, although 1 heterotrimer is thought to be able to translocate proteins. Interacts with the ribosome. Interacts with SecDF, and other proteins may be involved. Interacts with SecA.

Its subcellular location is the cell membrane. Functionally, the central subunit of the protein translocation channel SecYEG. Consists of two halves formed by TMs 1-5 and 6-10. These two domains form a lateral gate at the front which open onto the bilayer between TMs 2 and 7, and are clamped together by SecE at the back. The channel is closed by both a pore ring composed of hydrophobic SecY resides and a short helix (helix 2A) on the extracellular side of the membrane which forms a plug. The plug probably moves laterally to allow the channel to open. The ring and the pore may move independently. This chain is Protein translocase subunit SecY, found in Mycobacterium leprae (strain TN).